A 194-amino-acid polypeptide reads, in one-letter code: Leucyl/phenylalanyl-tRNA--protein transferase (194 aa).

It belongs to the L/F-transferase family.

The protein localises to the cytoplasm. The catalysed reaction is N-terminal L-lysyl-[protein] + L-leucyl-tRNA(Leu) = N-terminal L-leucyl-L-lysyl-[protein] + tRNA(Leu) + H(+). It carries out the reaction N-terminal L-arginyl-[protein] + L-leucyl-tRNA(Leu) = N-terminal L-leucyl-L-arginyl-[protein] + tRNA(Leu) + H(+). The enzyme catalyses L-phenylalanyl-tRNA(Phe) + an N-terminal L-alpha-aminoacyl-[protein] = an N-terminal L-phenylalanyl-L-alpha-aminoacyl-[protein] + tRNA(Phe). Its function is as follows. Functions in the N-end rule pathway of protein degradation where it conjugates Leu, Phe and, less efficiently, Met from aminoacyl-tRNAs to the N-termini of proteins containing an N-terminal arginine or lysine. This Chlorobium limicola (strain DSM 245 / NBRC 103803 / 6330) protein is Leucyl/phenylalanyl-tRNA--protein transferase.